The primary structure comprises 394 residues: WAT1-related protein At2g40900 (394 aa).

10 helical membrane-spanning segments follow: residues 13 to 33, 40 to 60, 67 to 87, 102 to 122, 142 to 162, 180 to 200, 209 to 229, 245 to 265, 273 to 293, and 298 to 318; these read FAMV…KTVL, YVLV…FALL, SKMT…GPVI, TFSS…ATLF, LVTV…INFF, AAVF…LQAA, LSMS…LAFV, LLAS…VQGL, VFVT…SFFV, and IYLG…AVLW. EamA domains follow at residues 22–147 and 189–317; these read YAGM…TVVG and LSWA…YAVL.

It belongs to the drug/metabolite transporter (DMT) superfamily. Plant drug/metabolite exporter (P-DME) (TC 2.A.7.4) family.

Its subcellular location is the membrane. The polypeptide is WAT1-related protein At2g40900 (Arabidopsis thaliana (Mouse-ear cress)).